Consider the following 191-residue polypeptide: Thymidine kinase (191 aa).

ATP contacts are provided by residues 9 to 16 (GTMNSGKT) and 85 to 88 (DEAQ). Glu-86 acts as the Proton acceptor in catalysis. The Zn(2+) site is built by Cys-143, Cys-146, Cys-180, and His-183.

The protein belongs to the thymidine kinase family. Homotetramer.

It is found in the cytoplasm. It carries out the reaction thymidine + ATP = dTMP + ADP + H(+). The polypeptide is Thymidine kinase (Streptococcus gordonii (strain Challis / ATCC 35105 / BCRC 15272 / CH1 / DL1 / V288)).